The sequence spans 420 residues: Serine protease inhibitor A3B (420 aa).

Residues 1-17 (MAFIAALGLLMAEICPA) form the signal peptide. Asparagine 104 and asparagine 349 each carry an N-linked (GlcNAc...) asparagine glycan. The interval 367 to 392 (GTEGDAITIVGYNFMSAKLKPVFVKF) is RCL.

It belongs to the serpin family.

It is found in the secreted. The chain is Serine protease inhibitor A3B (Serpina3b) from Mus musculus (Mouse).